The following is a 375-amino-acid chain: SAP-like protein BP-73 (375 aa).

Disordered stretches follow at residues 46 to 113, 130 to 233, and 257 to 315; these read PNNH…VPGE, RARG…VKFQ, and TLEN…PSLQ. Residues 59 to 70 are compositionally biased toward basic residues; it reads HQKGGSARRKSK. Acidic residues predominate over residues 76 to 86; that stretch reads DDSENIDEFDT. The span at 88–109 shows a compositional bias: polar residues; the sequence is IMSSKNGPPISLTSNSRPQATS. Basic and acidic residues-rich tracts occupy residues 134 to 152 and 163 to 186; these read KGKE…ERGS and HSVD…KRSN. Over residues 187 to 197 the composition is skewed to polar residues; sequence ESGNKQNSSIF. The span at 295–311 shows a compositional bias: acidic residues; it reads DEPDASDTDEPSGEYDE. The interval 338–375 is interaction with WAXY; the sequence is DLSTLKVTELRELAKSRGIKGYSKMKKNDLVELLSNMA.

Binds to the DNA in the promoter region of WAXY containing the sequence 5'-ACGCACGCTAACGTGA-3'. In terms of tissue distribution, expressed in tissues with high cell division activities: in root tips, stem node, panicle, flower and immature seed. Weakly expressed in root and leaf.

In terms of biological role, may regulate cell proliferation and plant growth. The protein is SAP-like protein BP-73 (BP-73) of Oryza sativa subsp. japonica (Rice).